Consider the following 414-residue polypeptide: Esterase FrsA (414 aa).

Belongs to the FrsA family.

It carries out the reaction a carboxylic ester + H2O = an alcohol + a carboxylate + H(+). Catalyzes the hydrolysis of esters. The chain is Esterase FrsA from Salmonella dublin (strain CT_02021853).